Here is a 162-residue protein sequence, read N- to C-terminus: Peptide deformylase (162 aa).

The Fe cation site is built by Cys-86 and His-128. Residue Glu-129 is part of the active site. A Fe cation-binding site is contributed by His-132.

Belongs to the polypeptide deformylase family. Requires Fe(2+) as cofactor.

It catalyses the reaction N-terminal N-formyl-L-methionyl-[peptide] + H2O = N-terminal L-methionyl-[peptide] + formate. Functionally, removes the formyl group from the N-terminal Met of newly synthesized proteins. Requires at least a dipeptide for an efficient rate of reaction. N-terminal L-methionine is a prerequisite for activity but the enzyme has broad specificity at other positions. This Treponema pallidum (strain Nichols) protein is Peptide deformylase.